The chain runs to 556 residues: M-phase inducer phosphatase (556 aa).

Disordered stretches follow at residues 165–186 (STDGLVPDSPTVLPKDGKQERR) and 257–297 (TSGL…RPRK). Basic residues predominate over residues 287-297 (KSAHPNMRPRK). In terms of domain architecture, Rhodanese spans 371-474 (MFDNIMIIDC…FFAEHRSLCY (104 aa)). Residue cysteine 421 is part of the active site. Positions 505-516 (RAQTFAFGQQSP) are enriched in polar residues. A disordered region spans residues 505–556 (RAQTFAFGQQSPEMEDSPTGRCRNNPGDRKLLASPFNDSPGSRFPGRRMLSY).

This sequence belongs to the MPI phosphatase family.

It carries out the reaction O-phospho-L-tyrosyl-[protein] + H2O = L-tyrosyl-[protein] + phosphate. Functionally, this protein functions as a dosage-dependent inducer in mitotic control. It is a tyrosine protein phosphatase required for progression of the cell cycle. It may directly dephosphorylate p34(cdc2) and activate the p34(cdc2) kinase activity. This Emericella nidulans (strain FGSC A4 / ATCC 38163 / CBS 112.46 / NRRL 194 / M139) (Aspergillus nidulans) protein is M-phase inducer phosphatase (nimT).